Reading from the N-terminus, the 311-residue chain is DNA-directed RNA polymerase subunit alpha (311 aa).

The tract at residues 1–228 is alpha N-terminal domain (alpha-NTD); the sequence is MQYQIERIDH…ELFQPLATVT (228 aa). Residues 239–311 are alpha C-terminal domain (alpha-CTD); sequence PSPEAQIPLE…ISIPQSRTSV (73 aa).

This sequence belongs to the RNA polymerase alpha chain family. In cyanobacteria the RNAP catalytic core is composed of 2 alpha, 1 beta, 1 beta', 1 gamma and 1 omega subunit. When a sigma factor is associated with the core the holoenzyme is formed, which can initiate transcription.

It carries out the reaction RNA(n) + a ribonucleoside 5'-triphosphate = RNA(n+1) + diphosphate. DNA-dependent RNA polymerase catalyzes the transcription of DNA into RNA using the four ribonucleoside triphosphates as substrates. The polypeptide is DNA-directed RNA polymerase subunit alpha (Prochlorococcus marinus (strain MIT 9312)).